The primary structure comprises 121 residues: Large ribosomal subunit protein P2 (121 aa).

Residues 72-99 are compositionally biased toward low complexity; that stretch reads VAVPSGGAPAAATAAAEAPKGGDKAAAP. Positions 72-121 are disordered; the sequence is VAVPSGGAPAAATAAAEAPKGGDKAAAPPKEEKKEESEESDADMGFSPFD.

The protein belongs to the eukaryotic ribosomal protein P1/P2 family. As to quaternary structure, P1 and P2 exist as dimers at the large ribosomal subunit. Phosphorylated.

Functionally, plays an important role in the elongation step of protein synthesis. In Taenia solium (Pork tapeworm), this protein is Large ribosomal subunit protein P2.